A 393-amino-acid polypeptide reads, in one-letter code: Chorismate synthase (393 aa).

R39 and R45 together coordinate NADP(+). FMN contacts are provided by residues 133–135 (RSS), 256–257 (NA), G301, 316–320 (KPIPT), and R342.

The protein belongs to the chorismate synthase family. In terms of assembly, homotetramer. FMNH2 is required as a cofactor.

The enzyme catalyses 5-O-(1-carboxyvinyl)-3-phosphoshikimate = chorismate + phosphate. The protein operates within metabolic intermediate biosynthesis; chorismate biosynthesis; chorismate from D-erythrose 4-phosphate and phosphoenolpyruvate: step 7/7. Functionally, catalyzes the anti-1,4-elimination of the C-3 phosphate and the C-6 proR hydrogen from 5-enolpyruvylshikimate-3-phosphate (EPSP) to yield chorismate, which is the branch point compound that serves as the starting substrate for the three terminal pathways of aromatic amino acid biosynthesis. This reaction introduces a second double bond into the aromatic ring system. The chain is Chorismate synthase from Lysinibacillus sphaericus (strain C3-41).